The following is a 217-amino-acid chain: Peroxiredoxin (217 aa).

The Thioredoxin domain maps to 2–159; it reads PVIGEKFPEV…IVRLVKALQV (158 aa). The active-site Cysteine sulfenic acid (-SOH) intermediate is Cys46. Arg122 is a binding site for substrate. A disulfide bridge connects residues Cys206 and Cys212.

Belongs to the peroxiredoxin family. Prx6 subfamily. Homodecamer. Pentamer of dimers that assemble into a ring structure.

Its subcellular location is the cytoplasm. It carries out the reaction a hydroperoxide + [thioredoxin]-dithiol = an alcohol + [thioredoxin]-disulfide + H2O. Thiol-specific peroxidase that catalyzes the reduction of hydrogen peroxide and organic hydroperoxides to water and alcohols, respectively. Plays a role in cell protection against oxidative stress by detoxifying peroxides. The sequence is that of Peroxiredoxin from Methanocaldococcus jannaschii (strain ATCC 43067 / DSM 2661 / JAL-1 / JCM 10045 / NBRC 100440) (Methanococcus jannaschii).